A 128-amino-acid polypeptide reads, in one-letter code: NADPH-dependent 7-cyano-7-deazaguanine reductase (128 aa).

Catalysis depends on cysteine 39, which acts as the Thioimide intermediate. Aspartate 46 (proton donor) is an active-site residue. Substrate is bound by residues 61 to 63 (IEL) and 80 to 81 (HE).

The protein belongs to the GTP cyclohydrolase I family. QueF type 1 subfamily.

The protein localises to the cytoplasm. It carries out the reaction 7-aminomethyl-7-carbaguanine + 2 NADP(+) = 7-cyano-7-deazaguanine + 2 NADPH + 3 H(+). The protein operates within tRNA modification; tRNA-queuosine biosynthesis. Its function is as follows. Catalyzes the NADPH-dependent reduction of 7-cyano-7-deazaguanine (preQ0) to 7-aminomethyl-7-deazaguanine (preQ1). The sequence is that of NADPH-dependent 7-cyano-7-deazaguanine reductase from Magnetococcus marinus (strain ATCC BAA-1437 / JCM 17883 / MC-1).